The following is a 229-amino-acid chain: Enolase-phosphatase E1 (229 aa).

Positions 7 and 9 each coordinate Mg(2+). Substrate contacts are provided by residues Ser122–Ser123 and Lys161. Asp186 serves as a coordination point for Mg(2+).

It belongs to the HAD-like hydrolase superfamily. MasA/MtnC family. As to quaternary structure, monomer. Mg(2+) serves as cofactor.

It localises to the cytoplasm. The protein resides in the nucleus. It catalyses the reaction 5-methylsulfanyl-2,3-dioxopentyl phosphate + H2O = 1,2-dihydroxy-5-(methylsulfanyl)pent-1-en-3-one + phosphate. The protein operates within amino-acid biosynthesis; L-methionine biosynthesis via salvage pathway; L-methionine from S-methyl-5-thio-alpha-D-ribose 1-phosphate: step 3/6. Its pathway is amino-acid biosynthesis; L-methionine biosynthesis via salvage pathway; L-methionine from S-methyl-5-thio-alpha-D-ribose 1-phosphate: step 4/6. Bifunctional enzyme that catalyzes the enolization of 2,3-diketo-5-methylthiopentyl-1-phosphate (DK-MTP-1-P) into the intermediate 2-hydroxy-3-keto-5-methylthiopentenyl-1-phosphate (HK-MTPenyl-1-P), which is then dephosphorylated to form the acireductone 1,2-dihydroxy-3-keto-5-methylthiopentene (DHK-MTPene). The chain is Enolase-phosphatase E1 from Clavispora lusitaniae (strain ATCC 42720) (Yeast).